A 1011-amino-acid chain; its full sequence is Protein translocase subunit SecA, chloroplastic (1011 aa).

Over residues Met-1 to Pro-17 the composition is skewed to polar residues. The tract at residues Met-1–His-22 is disordered. Residues Met-1 to Val-59 constitute a chloroplast transit peptide. An ATP-binding site is contributed by Met-164–Thr-171. Residues Gln-976 to Ser-1011 form a disordered region.

Belongs to the SecA family.

It is found in the plastid. Its subcellular location is the chloroplast stroma. The protein resides in the chloroplast thylakoid membrane. It catalyses the reaction ATP + H2O + chloroplast-proteinSide 1 = ADP + phosphate + chloroplast-proteinSide 2.. In terms of biological role, has a central role in coupling the hydrolysis of ATP to the transfer of proteins across the thylakoid membrane. Facilitates the transport of precursor proteins from the chloroplast stroma to thylakoid lumen. The sequence is that of Protein translocase subunit SecA, chloroplastic from Pisum sativum (Garden pea).